Reading from the N-terminus, the 287-residue chain is Nucleotide-binding protein Dtpsy_0831 (287 aa).

Residue 10-17 (GMSGSGKS) participates in ATP binding. Residue 59-62 (DVRS) coordinates GTP.

Belongs to the RapZ-like family.

Functionally, displays ATPase and GTPase activities. This chain is Nucleotide-binding protein Dtpsy_0831, found in Acidovorax ebreus (strain TPSY) (Diaphorobacter sp. (strain TPSY)).